Here is a 475-residue protein sequence, read N- to C-terminus: MNHLVIISVFLSSVLLLYRGESGITSSFIRSEWPAVDIPLDHHVFKVPKGYNAPQQVHITQGDYDGKAVIISWVTPDEPGSSQVHYGAVQGKYEFVAQGTYHNYTFYKYKSGFIHHCLVSDLEHDTKYYYKIESGESSREFWFVTPPHVHPDASYKFGIIGDMGQTFNSLSTLEHYMESGAQAVLFLGDLSYADRYQYNDVGVRWDSWGRFVERSTAYQPWLWSAGNHEVDYMPYMGEVTPFRNYLQRYTTPYLASKSSSPLWYAVRRASAHIIVLSSYSPFVKYTPQWHWLSEELTRVDREKTPWLIVLMHVPIYNSNEAHFMEGESMRAAFEEWFVQHKVDVIFAGHVHAYERSYRISNVRYNVSSGDRYPVPDKSAPVYITVGDGGNQEGLAGRFTEPQPDYSAFREASYGHSTLDIKNRTHAIYHWNRNDDGKKVATDEFVLHNQYWGKNIRRRKLKKHYIRSVVGGWIAT.

Residues 1–30 (MNHLVIISVFLSSVLLLYRGESGITSSFIR) form the signal peptide. A glycan (N-linked (GlcNAc...) asparagine) is linked at Asn-103. 3 residues coordinate Fe cation: Asp-162, Asp-189, and Tyr-192. Asp-189 contacts Zn(2+). 2 residues coordinate Zn(2+): Asn-227 and His-312. Asn-227 provides a ligand contact to substrate. The Proton donor role is filled by His-322. His-349 is a binding site for Zn(2+). 349–351 (HVH) provides a ligand contact to substrate. His-351 is a Fe cation binding site. 2 N-linked (GlcNAc...) asparagine glycosylation sites follow: Asn-365 and Asn-422.

It belongs to the metallophosphoesterase superfamily. Purple acid phosphatase family. Homodimer. Requires Fe cation as cofactor. Zn(2+) is required as a cofactor. Glycosylated. In terms of tissue distribution, expressed in roots, stems, leaves, flowers and siliques.

It localises to the vacuole. The enzyme catalyses a phosphate monoester + H2O = an alcohol + phosphate. It catalyses the reaction 2 a phenolic donor + H2O2 = 2 a phenolic radical donor + 2 H2O. With respect to regulation, activated by Mg(2+), Co(2+), Mn(2+) and Ba(2+). Inhibited by Fe(2+), Cu(2+), Zn(2+), NaF, molybdate, arsenate, vanadate and inorganic phosphate. No effect of tartrate, Asp, Gln, glutathione, Asn, ascorbic acid and phosphite. Metallo-phosphoesterase involved in phosphate metabolism. Acid phosphatase activity with phosphoenolpyruvate, inorganic pyrophosphate, phenyl-phosphate and p-nitrophenyl-phosphate as the most effective substrates. No activity with phytic acid, phosphocholine or bis-p-nitrophenyl-phosphate. Has a peroxidase activity at alkaline pH. This chain is Bifunctional purple acid phosphatase 26 (PAP26), found in Arabidopsis thaliana (Mouse-ear cress).